We begin with the raw amino-acid sequence, 253 residues long: tRNA uridine(34) hydroxylase (253 aa).

Positions 127–221 constitute a Rhodanese domain; it reads HGRPLVLLDT…YFEDVGGEGY (95 aa). Cysteine 181 acts as the Cysteine persulfide intermediate in catalysis.

Belongs to the TrhO family.

The catalysed reaction is uridine(34) in tRNA + AH2 + O2 = 5-hydroxyuridine(34) in tRNA + A + H2O. Functionally, catalyzes oxygen-dependent 5-hydroxyuridine (ho5U) modification at position 34 in tRNAs. The sequence is that of tRNA uridine(34) hydroxylase from Xanthomonas campestris pv. campestris (strain B100).